Reading from the N-terminus, the 70-residue chain is Pyruvate-flavodoxin oxidoreductase (70 aa).

Belongs to the pyruvate:ferredoxin/flavodoxin oxidoreductase family.

It carries out the reaction oxidized [flavodoxin] + pyruvate + CoA + 2 H(+) = reduced [flavodoxin] + acetyl-CoA + CO2. Its function is as follows. Oxidoreductase required for the transfer of electrons from pyruvate to flavodoxin, which reduces nitrogenase. This Anabaena variabilis protein is Pyruvate-flavodoxin oxidoreductase (nifJ).